The primary structure comprises 291 residues: Neugrin (291 aa).

The signal sequence occupies residues 1–15; that stretch reads MAVTLSLLLSGRVCA. The disordered stretch occupies residues 27 to 49; the sequence is VADPGPIGREPDPDSDWEPEERE. The segment covering 39–49 has biased composition (acidic residues); sequence PDSDWEPEERE. S41 carries the post-translational modification Phosphoserine. N158 is a glycosylation site (N-linked (GlcNAc...) asparagine). Positions 224 to 270 are disordered; sequence VAAPLGHPRELQKYSSDSESPRRTGNGALPSDQKLEELKAEEPGNFS. The segment covering 256-265 has biased composition (basic and acidic residues); that stretch reads QKLEELKAEE.

This sequence belongs to the neugrin family. As to quaternary structure, forms a regulatory protein-RNA complex, consisting of RCC1L, NGRN, RPUSD3, RPUSD4, TRUB2, FASTKD2 and 16S mt-rRNA. Interacts with 16S mt-rRNA; this interaction is direct.

Its subcellular location is the nucleus. The protein resides in the secreted. It localises to the mitochondrion membrane. In terms of biological role, plays an essential role in mitochondrial ribosome biogenesis. As a component of a functional protein-RNA module, consisting of RCC1L, NGRN, RPUSD3, RPUSD4, TRUB2, FASTKD2 and 16S mitochondrial ribosomal RNA (16S mt-rRNA), controls 16S mt-rRNA abundance and is required for intra-mitochondrial translation of core subunits of the oxidative phosphorylation system. In Pongo abelii (Sumatran orangutan), this protein is Neugrin (NGRN).